A 1178-amino-acid polypeptide reads, in one-letter code: DNA-directed RNA polymerase subunit beta' (1178 aa).

Residues cysteine 60, cysteine 62, cysteine 75, and cysteine 78 each contribute to the Zn(2+) site. Aspartate 450, aspartate 452, and aspartate 454 together coordinate Mg(2+). Positions 795, 869, 876, and 879 each coordinate Zn(2+).

Belongs to the RNA polymerase beta' chain family. As to quaternary structure, the RNAP catalytic core consists of 2 alpha, 1 beta, 1 beta' and 1 omega subunit. When a sigma factor is associated with the core the holoenzyme is formed, which can initiate transcription. It depends on Mg(2+) as a cofactor. Zn(2+) serves as cofactor.

It catalyses the reaction RNA(n) + a ribonucleoside 5'-triphosphate = RNA(n+1) + diphosphate. Functionally, DNA-dependent RNA polymerase catalyzes the transcription of DNA into RNA using the four ribonucleoside triphosphates as substrates. The protein is DNA-directed RNA polymerase subunit beta' of Clostridium beijerinckii (strain ATCC 51743 / NCIMB 8052) (Clostridium acetobutylicum).